Reading from the N-terminus, the 88-residue chain is Small ribosomal subunit protein bS16 (88 aa).

Belongs to the bacterial ribosomal protein bS16 family.

In Anaeromyxobacter sp. (strain Fw109-5), this protein is Small ribosomal subunit protein bS16.